The sequence spans 207 residues: MKTKILSLANEEVGEISLNEDIFAVEFIRDDIIKQVIDWQRAKAMSGNHKTKTVSEVLGTTKKPFKQKGTGNARQGSLRSVQMRGGGVAHGPRVRSHATKLPKKVRKLGLIHALSEKCAEGKLLVIDSLKLDKPKTSALVNILNKFQGKSFFVIDGNEVDINFSLAAKNIYNTVIVPQIGANVYDIIRHEYVLLSQEAVSVLEERLR.

The protein belongs to the universal ribosomal protein uL4 family. In terms of assembly, part of the 50S ribosomal subunit.

Functionally, one of the primary rRNA binding proteins, this protein initially binds near the 5'-end of the 23S rRNA. It is important during the early stages of 50S assembly. It makes multiple contacts with different domains of the 23S rRNA in the assembled 50S subunit and ribosome. Forms part of the polypeptide exit tunnel. This is Large ribosomal subunit protein uL4 from Rickettsia conorii (strain ATCC VR-613 / Malish 7).